Reading from the N-terminus, the 594-residue chain is Putative phospholipase B-like 2 (594 aa).

The N-terminal stretch at 1–46 is a signal peptide; the sequence is MAAPVDGSSGGWAARALRRALALTSLTTLALLASLTGLLLSGPAGA. 2 N-linked (GlcNAc...) asparagine glycosylation sites follow: Asn93 and Asn115. A disulfide bridge connects residues Cys147 and Cys157. N-linked (GlcNAc...) asparagine glycans are attached at residues Asn236 and Asn441. A disulfide bond links Cys497 and Cys500. The N-linked (GlcNAc...) asparagine glycan is linked to Asn520.

This sequence belongs to the phospholipase B-like family. Interacts with IGF2R. Post-translationally, the p76 protein is synthesized as a 76 kDa precursor which is then processed into a N-terminal 28 kDa form and a C-terminal 40 kDa form. The C-terminal peptide is further processed into a 15 kDa form. Glycosylated; contains mannose 6-phosphate sugars. Present at highest levels in spleen, lung and brain (at protein level).

The protein localises to the lysosome lumen. Functionally, putative phospholipase. The chain is Putative phospholipase B-like 2 (Plbd2) from Mus musculus (Mouse).